A 440-amino-acid polypeptide reads, in one-letter code: Xylose isomerase (440 aa).

Catalysis depends on residues His100 and Asp103. 7 residues coordinate Mg(2+): Glu231, Glu267, His270, Asp295, Asp306, Asp308, and Asp338.

It belongs to the xylose isomerase family. As to quaternary structure, homotetramer. Requires Mg(2+) as cofactor.

It localises to the cytoplasm. The enzyme catalyses alpha-D-xylose = alpha-D-xylulofuranose. The protein is Xylose isomerase of Burkholderia vietnamiensis (strain G4 / LMG 22486) (Burkholderia cepacia (strain R1808)).